The following is a 364-amino-acid chain: Fructose-bisphosphate aldolase C-A (364 aa).

Substrate contacts are provided by arginine 56 and lysine 147. The Proton acceptor role is filled by glutamate 188. Lysine 230 (schiff-base intermediate with dihydroxyacetone-P) is an active-site residue.

Belongs to the class I fructose-bisphosphate aldolase family. Homotetramer. Expressed specifically in Purkinje cells in the brain.

The enzyme catalyses beta-D-fructose 1,6-bisphosphate = D-glyceraldehyde 3-phosphate + dihydroxyacetone phosphate. The protein operates within carbohydrate degradation; glycolysis; D-glyceraldehyde 3-phosphate and glycerone phosphate from D-glucose: step 4/4. This Danio rerio (Zebrafish) protein is Fructose-bisphosphate aldolase C-A.